Consider the following 229-residue polypeptide: Ribonuclease S-6 (229 aa).

A signal peptide spans 1-27 (MGITGMIYMVPMVFSLIVLISCSSTMG). RNA is bound at residue Q36. The cysteines at positions 42 and 49 are disulfide-linked. H60 is an RNA binding site. The active-site Proton donor is the H60. C75 and C119 are joined by a disulfide. N-linked (GlcNAc) asparagine glycosylation is found at N77 and N87. RNA-binding positions include 98–99 (NV), F108, 111–112 (RQ), and 115–116 (KH). Residue Q112 is part of the active site. Catalysis depends on H116, which acts as the Proton acceptor. N-linked (GlcNAc...) (high mannose) asparagine glycosylation is present at N145. 2 disulfide bridges follow: C184–C222 and C199–C210. N-linked (GlcNAc) asparagine; alternate glycosylation occurs at N188. N-linked (GlcNAc...) asparagine; alternate glycosylation is found at N188 and N203.

This sequence belongs to the RNase T2 family. Post-translationally, the N-glycans attached at Asn-188 and Asn-203 consist of either monosaccharide (GlcNAc) or disaccharide (GlcNAc-GlcNAc) that could not be distinguished.

It catalyses the reaction a ribonucleotidyl-ribonucleotide-RNA + H2O = a 3'-end 3'-phospho-ribonucleotide-RNA + a 5'-end dephospho-ribonucleoside-RNA + H(+). Functionally, self-incompatibility (SI) is the inherited ability of a flowering plant to prevent self-fertilization by discriminating between self and non-self pollen during pollination. In many species, self-incompatibility is controlled by the single, multiallelic locus S. The sequence is that of Ribonuclease S-6 from Pyrus pyrifolia (Chinese pear).